Consider the following 506-residue polypeptide: Photosystem II CP47 reaction center protein (506 aa).

A run of 6 helical transmembrane segments spans residues 21 to 36 (SVHIMHTALVAGWAGS), 101 to 115 (ILFSGLCFLAAIWHW), 140 to 156 (GIHLFLSGLGCFGFGAF), 203 to 218 (IAAGTLGILAGLFHLS), 237 to 252 (VLSSSIAAVFFAAFVV), and 457 to 472 (SFALLFFFGHIWHGAR).

It belongs to the PsbB/PsbC family. PsbB subfamily. As to quaternary structure, PSII is composed of 1 copy each of membrane proteins PsbA, PsbB, PsbC, PsbD, PsbE, PsbF, PsbH, PsbI, PsbJ, PsbK, PsbL, PsbM, PsbT, PsbX, PsbY, PsbZ, Psb30/Ycf12, at least 3 peripheral proteins of the oxygen-evolving complex and a large number of cofactors. It forms dimeric complexes. Binds multiple chlorophylls. PSII binds additional chlorophylls, carotenoids and specific lipids. serves as cofactor.

It is found in the plastid. It localises to the chloroplast thylakoid membrane. One of the components of the core complex of photosystem II (PSII). It binds chlorophyll and helps catalyze the primary light-induced photochemical processes of PSII. PSII is a light-driven water:plastoquinone oxidoreductase, using light energy to abstract electrons from H(2)O, generating O(2) and a proton gradient subsequently used for ATP formation. The polypeptide is Photosystem II CP47 reaction center protein (Cucumis sativus (Cucumber)).